A 265-amino-acid chain; its full sequence is Tryptophan synthase alpha chain (265 aa).

Active-site proton acceptor residues include E47 and D58.

This sequence belongs to the TrpA family. As to quaternary structure, tetramer of two alpha and two beta chains.

It carries out the reaction (1S,2R)-1-C-(indol-3-yl)glycerol 3-phosphate + L-serine = D-glyceraldehyde 3-phosphate + L-tryptophan + H2O. It participates in amino-acid biosynthesis; L-tryptophan biosynthesis; L-tryptophan from chorismate: step 5/5. In terms of biological role, the alpha subunit is responsible for the aldol cleavage of indoleglycerol phosphate to indole and glyceraldehyde 3-phosphate. This Methanoregula boonei (strain DSM 21154 / JCM 14090 / 6A8) protein is Tryptophan synthase alpha chain.